The following is a 513-amino-acid chain: Probable mannosyl-oligosaccharide alpha-1,2-mannosidase 1B (513 aa).

A signal peptide spans 1 to 21; the sequence is MHLSSLSLSLTALAIVSPSAA. 7 N-linked (GlcNAc...) asparagine glycosylation sites follow: N97, N117, N184, N251, N322, N348, and N368. C334 and C363 are disulfide-bonded. The Proton donor role is filled by E377. Residue T503 participates in Ca(2+) binding.

This sequence belongs to the glycosyl hydrolase 47 family. Monomer. Requires Ca(2+) as cofactor. It depends on Mg(2+) as a cofactor.

Its subcellular location is the cytoplasmic vesicle lumen. The catalysed reaction is N(4)-(alpha-D-Man-(1-&gt;2)-alpha-D-Man-(1-&gt;2)-alpha-D-Man-(1-&gt;3)-[alpha-D-Man-(1-&gt;2)-alpha-D-Man-(1-&gt;3)-[alpha-D-Man-(1-&gt;2)-alpha-D-Man-(1-&gt;6)]-alpha-D-Man-(1-&gt;6)]-beta-D-Man-(1-&gt;4)-beta-D-GlcNAc-(1-&gt;4)-beta-D-GlcNAc)-L-asparaginyl-[protein] (N-glucan mannose isomer 9A1,2,3B1,2,3) + 4 H2O = N(4)-(alpha-D-Man-(1-&gt;3)-[alpha-D-Man-(1-&gt;3)-[alpha-D-Man-(1-&gt;6)]-alpha-D-Man-(1-&gt;6)]-beta-D-Man-(1-&gt;4)-beta-D-GlcNAc-(1-&gt;4)-beta-D-GlcNAc)-L-asparaginyl-[protein] (N-glucan mannose isomer 5A1,2) + 4 beta-D-mannose. It carries out the reaction N(4)-(alpha-D-Man-(1-&gt;2)-alpha-D-Man-(1-&gt;2)-alpha-D-Man-(1-&gt;3)-[alpha-D-Man-(1-&gt;3)-[alpha-D-Man-(1-&gt;2)-alpha-D-Man-(1-&gt;6)]-alpha-D-Man-(1-&gt;6)]-beta-D-Man-(1-&gt;4)-beta-D-GlcNAc-(1-&gt;4)-beta-D-GlcNAc)-L-asparaginyl-[protein] (N-glucan mannose isomer 8A1,2,3B1,3) + 3 H2O = N(4)-(alpha-D-Man-(1-&gt;3)-[alpha-D-Man-(1-&gt;3)-[alpha-D-Man-(1-&gt;6)]-alpha-D-Man-(1-&gt;6)]-beta-D-Man-(1-&gt;4)-beta-D-GlcNAc-(1-&gt;4)-beta-D-GlcNAc)-L-asparaginyl-[protein] (N-glucan mannose isomer 5A1,2) + 3 beta-D-mannose. It functions in the pathway protein modification; protein glycosylation. In terms of biological role, involved in the maturation of Asn-linked oligosaccharides. Progressively trims alpha-1,2-linked mannose residues from Man(9)GlcNAc(2) to produce Man(5)GlcNAc(2). The sequence is that of Probable mannosyl-oligosaccharide alpha-1,2-mannosidase 1B (mns1B) from Aspergillus niger (strain ATCC MYA-4892 / CBS 513.88 / FGSC A1513).